The primary structure comprises 126 residues: Adenosine 5'-monophosphoramidase HINT1 (126 aa).

N-acetylalanine is present on Ala2. An HIT domain is found at 18 to 126 (IFGKIIRKEI…GGRQMNWPPG (109 aa)). N6-acetyllysine occurs at positions 21 and 30. An AMP-binding site is contributed by 43–44 (DI). A phosphoserine mark is found at Ser45 and Ser72. Residues Asn99, 105–107 (GQS), and 112–114 (HLH) each bind AMP. The short motif at 110 to 114 (HVHLH) is the Histidine triad motif element. The active-site Tele-AMP-histidine intermediate is the His112.

It belongs to the HINT family. As to quaternary structure, homodimer. Interacts with CDK7. Interacts with RUVBL1 and RUVBL2 and is associated with the LEF1/TCF1-CTNNB1 complex and with a KAT5 histone acetyltransferase complex. Identified in a complex with MITF and CTNNB1. Interacts with CDC34 and RBX1, and is part of a SCF (SKP2-CUL1-F-box protein) E3 ubiquitin-protein ligase complex. Interacts with SUMO1, SUMO2 and RGS17. Interacts with the Ten-1 ICD form of TENM1. Interacts with CALM1; interaction increases in the presence of calcium ions. In terms of tissue distribution, widely expressed.

Its subcellular location is the cytoplasm. It localises to the nucleus. It carries out the reaction adenosine 5'-phosphoramidate + H2O = AMP + NH4(+). Functionally, exhibits adenosine 5'-monophosphoramidase activity, hydrolyzing purine nucleotide phosphoramidates with a single phosphate group such as adenosine 5'monophosphoramidate (AMP-NH2) to yield AMP and NH2. Hydrolyzes adenosine 5'monophosphomorpholidate (AMP-morpholidate) and guanosine 5'monophosphomorpholidate (GMP-morpholidate). Hydrolyzes lysyl-AMP (AMP-N-epsilon-(N-alpha-acetyl lysine methyl ester)) generated by lysine tRNA ligase. Hydrolyzes Met-AMP, His-AMP, Asp-AMP, lysyl-GMP (GMP-N-epsilon-(N-alpha-acetyl lysine methyl ester)) and AMP-N-alanine methyl ester. Can also convert adenosine 5'-O-phosphorothioate and guanosine 5'-O-phosphorothioate to the corresponding nucleoside 5'-O-phosphates with concomitant release of hydrogen sulfide. In addition, functions as a scaffolding protein that modulates transcriptional activation by the LEF1/TCF1-CTNNB1 complex and by the complex formed with MITF and CTNNB1. Modulates p53/TP53 levels and p53/TP53-mediated apoptosis. Modulates proteasomal degradation of target proteins by the SCF (SKP2-CUL1-F-box protein) E3 ubiquitin-protein ligase complex. Also exhibits SUMO-specific isopeptidase activity, deconjugating SUMO1 from RANGAP1 and RGS17. The polypeptide is Adenosine 5'-monophosphoramidase HINT1 (HINT1) (Oryctolagus cuniculus (Rabbit)).